Consider the following 127-residue polypeptide: Large ribosomal subunit protein uL22c (127 aa).

It belongs to the universal ribosomal protein uL22 family. As to quaternary structure, part of the 50S ribosomal subunit.

Its subcellular location is the plastid. It localises to the chloroplast. This protein binds specifically to 23S rRNA. Its function is as follows. The globular domain of the protein is located near the polypeptide exit tunnel on the outside of the subunit, while an extended beta-hairpin is found that lines the wall of the exit tunnel in the center of the 70S ribosome. This chain is Large ribosomal subunit protein uL22c (rpl22), found in Acorus calamus var. americanus (American sweet flag).